The following is an 806-amino-acid chain: Leucine--tRNA ligase (806 aa).

Residues 40-51 (PYPSGKGLHVGH) carry the 'HIGH' region motif. Positions 580 to 584 (KMSKS) match the 'KMSKS' region motif. K583 is an ATP binding site.

This sequence belongs to the class-I aminoacyl-tRNA synthetase family.

It localises to the cytoplasm. The catalysed reaction is tRNA(Leu) + L-leucine + ATP = L-leucyl-tRNA(Leu) + AMP + diphosphate. This Ureaplasma urealyticum serovar 10 (strain ATCC 33699 / Western) protein is Leucine--tRNA ligase.